Here is a 192-residue protein sequence, read N- to C-terminus: uncharacterized protein (192 aa).

Residues 168–192 form a disordered region; the sequence is PLWRKSEAGSRKARTSNSGGPTKRA. The segment covering 182–192 has biased composition (polar residues); that stretch reads TSNSGGPTKRA.

It to A.xylinum IS1268 ORFA.

This is an uncharacterized protein from Sinorhizobium fredii (strain NBRC 101917 / NGR234).